Consider the following 371-residue polypeptide: AA9 family lytic polysaccharide monooxygenase B (371 aa).

Positions 1–25 are cleaved as a signal peptide; sequence MSIAKIAGVVLGSAALVAGHGYVSG. Cu(2+) contacts are provided by His20 and His104. Cystine bridges form between Cys74-Cys194 and Cys115-Cys119. N-linked (GlcNAc...) asparagine glycosylation is present at Asn154. O2-binding residues include His180 and Gln189. Residue Tyr191 coordinates Cu(2+). The interval 304 to 332 is disordered; that stretch reads HVQATSSSAAASTPTASSGASSGSGSSSS. Residues 307 to 332 are compositionally biased toward low complexity; that stretch reads ATSSSAAASTPTASSGASSGSGSSSS.

The protein belongs to the polysaccharide monooxygenase AA9 family. The cofactor is Cu(2+).

The protein resides in the secreted. It carries out the reaction [(1-&gt;4)-beta-D-glucosyl]n+m + reduced acceptor + O2 = 4-dehydro-beta-D-glucosyl-[(1-&gt;4)-beta-D-glucosyl]n-1 + [(1-&gt;4)-beta-D-glucosyl]m + acceptor + H2O.. Its function is as follows. Lytic polysaccharide monooxygenase (LPMO) that depolymerizes crystalline and amorphous polysaccharides via the oxidation of scissile alpha- or beta-(1-4)-glycosidic bonds, yielding C1 and C4 oxidation products. Catalysis by LPMOs requires the reduction of the active-site copper from Cu(II) to Cu(I) by a reducing agent and H(2)O(2) or O(2) as a cosubstrate. In addition to cellulose, also cleaves the beta-(1!4)-glucan backbone of tamarind xyloglucan, irrespective of substitutions which contrasts with AA9A xyloglucan cleavage activity. The protein is AA9 family lytic polysaccharide monooxygenase B of Aspergillus tamarii.